The primary structure comprises 185 residues: Elongation factor P 1 (185 aa).

This sequence belongs to the elongation factor P family.

Its subcellular location is the cytoplasm. It participates in protein biosynthesis; polypeptide chain elongation. In terms of biological role, involved in peptide bond synthesis. Stimulates efficient translation and peptide-bond synthesis on native or reconstituted 70S ribosomes in vitro. Probably functions indirectly by altering the affinity of the ribosome for aminoacyl-tRNA, thus increasing their reactivity as acceptors for peptidyl transferase. This is Elongation factor P 1 (efp1) from Chlamydia muridarum (strain MoPn / Nigg).